The primary structure comprises 438 residues: UPF0229 protein R01398 (438 aa).

The segment at 55–107 (PARGVNEPAFQPDSNSGERRHVLPGNREFAAGDRIPKRGSGGGAGNAGAGTGQ) is disordered. Gly residues predominate over residues 93–105 (GSGGGAGNAGAGT).

Belongs to the UPF0229 family.

This Rhizobium meliloti (strain 1021) (Ensifer meliloti) protein is UPF0229 protein R01398.